The chain runs to 124 residues: Non-structural protein 2 (124 aa).

Residues 121–124 (DLNP) carry the DLNP; interaction with MAP1B motif.

The protein belongs to the pneumovirus non-structural protein 2 family. In terms of assembly, monomer (instable). Homomultimer. Heteromultimer with NS1. Interacts with host RIGI (via N-terminus); this interaction prevents host signaling pathway involved in interferon production. Interacts with host MAP1B/microtubule-associated protein 1B.

It is found in the host mitochondrion. Its function is as follows. Plays a major role in antagonizing the type I IFN-mediated antiviral response. Acts cooperatively with NS1 to repress activation and nuclear translocation of host IFN-regulatory factor IRF3. Interacts with the host cytoplasmic sensor of viral nucleic acids RIGI and prevents the interaction with its downstream partner MAVS. Together with NS2, participates in the proteasomal degradation of host STAT2, IRF3, IRF7, TBK1 and RIGI through a NS-degradasome involving CUL2 and Elongin-C. The degradasome requires an intact mitochondrial MAVS. Induces host SOCS1 expression. Induces activation of NF-kappa-B. Suppresses premature apoptosis by an NF-kappa-B-dependent, interferon-independent mechanism promoting continued viral replication. The protein is Non-structural protein 2 (1B) of Human respiratory syncytial virus B (strain B1).